An 862-amino-acid chain; its full sequence is Taxadiene synthase (862 aa).

The interval 45 to 66 is disordered; the sequence is RVKMSRGSGGPGPVVMMSSSTG. Mg(2+)-binding residues include Asp613, Asp617, Asn757, Thr761, and Glu765. Positions 613–617 match the DDXXD motif motif; that stretch reads DDMAD.

This sequence belongs to the terpene synthase family. Requires Mg(2+) as cofactor.

It carries out the reaction (2E,6E,10E)-geranylgeranyl diphosphate = taxa-4(5),11(12)-diene + diphosphate. Its pathway is alkaloid biosynthesis; taxol biosynthesis; taxa-4(20),11-dien-5alpha-ol from geranylgeranyl diphosphate: step 1/2. Functionally, catalyzes the cyclization of the ubiquitous isoprenoid intermediate geranylgeranyl diphosphate to taxa-4,11-diene, the parent olefin with a taxane skeleton. The chain is Taxadiene synthase (TDC1) from Taxus chinensis (Chinese yew).